The chain runs to 92 residues: Small ribosomal subunit protein uS19 (92 aa).

This sequence belongs to the universal ribosomal protein uS19 family.

In terms of biological role, protein S19 forms a complex with S13 that binds strongly to the 16S ribosomal RNA. This is Small ribosomal subunit protein uS19 from Proteus mirabilis (strain HI4320).